Here is a 344-residue protein sequence, read N- to C-terminus: tRNA N6-adenosine threonylcarbamoyltransferase (344 aa).

Positions 110 and 114 each coordinate Fe cation. Substrate-binding positions include 133–137, Asp-166, Gly-179, and Asn-278; that span reads AVSGA. Residue Asp-303 coordinates Fe cation.

Belongs to the KAE1 / TsaD family. Fe(2+) serves as cofactor.

The protein resides in the cytoplasm. The catalysed reaction is L-threonylcarbamoyladenylate + adenosine(37) in tRNA = N(6)-L-threonylcarbamoyladenosine(37) in tRNA + AMP + H(+). Functionally, required for the formation of a threonylcarbamoyl group on adenosine at position 37 (t(6)A37) in tRNAs that read codons beginning with adenine. Is involved in the transfer of the threonylcarbamoyl moiety of threonylcarbamoyl-AMP (TC-AMP) to the N6 group of A37, together with TsaE and TsaB. TsaD likely plays a direct catalytic role in this reaction. This Chlamydia caviae (strain ATCC VR-813 / DSM 19441 / 03DC25 / GPIC) (Chlamydophila caviae) protein is tRNA N6-adenosine threonylcarbamoyltransferase.